The following is a 263-amino-acid chain: Virulence plasmid protein pGP6-D-related protein (263 aa).

Belongs to the UPF0137 (pGP6-D) family.

In Chlamydia trachomatis serovar D (strain ATCC VR-885 / DSM 19411 / UW-3/Cx), this protein is Virulence plasmid protein pGP6-D-related protein.